A 2060-amino-acid chain; its full sequence is MFPGDMESKASSMNGDQPSSPTPSSSTSVTIPTYTPTSMYDQELQFSRSVAKHVYEAAATLRAAFLCGFQPYTDVASFAHDEIVSQLHYWSSFISFVNDPANNQAFTRMDILEVTRALVQCAEDTVLAGNDIHMIVAHLQIPQSEKGRIIKTFVTANSMLGDQPEVEVSNLVRSSLDGESTVYVIFGGQGNGDGYFAELAELYEVYQPLVGDLVRSASDLFRHLTDKMDVNDCFSEGMELMAWIDKDNDTPIPSRPYLLSSAISFPLITLLQLLHFKISFHYSGCSFKDVQRFLAGVTGHSQGIIAAAAIAAVDSPASFHELSLQAMTVSFSMGVRIHQYYGPQVLPQLITEACLAEGKPIPTPMLSVRGLSIETLATTIQDLNKSLPRTKVQLEVGLRNNDSNYVITGDPMSLRGLCTHFDHKKKALDIVYQFLPAAAPYHNSYLSIAASRAIEDCQEIILRGCDLKMPVFSTVDGSDLRNNEGANLVPDLIRMVCCQVVNWPAALNMPGATHILDFGPGGAQGVGVLANSMKAGQGVRVIHATVLNGLNTELGYKPDLFDRSRKASERVSKPQPWVNSFQPTLTRFTENKLVVSTRFTRLFLQPPIMVAAMTPTTTSWDFVAAVMKAGFHAELACGGFHDRDSLSAAITAIANQVEPGTGITCNVIYSSPTSLRWQIDELEKLVAAGYQIDGLSIGAGVPSVEVVQGYVERLQLQHIALKPGSTEAIERTLKIAKALQPLPVVLQWTGGRGGGHHSNQDFHAPLISMYGKIRAQDNVVLVVGSGFGGPSDTLPYITGKWASDMGLPPMPVDGILLGSRVMVAKEAHTSTEAKHLIVATEGAPDDEWSGTYSRPTGGVLSVISEMRQPIHKIATRAVRLWHELDQTIFHLGPKERVAEITRRRDEIIRRLNHDYHRVWFGCSGPTRDPVELDEMTYSEVLHRFVELAYVTAEHRWVHLSWKKLFSELLTRTMSRLHRTSDSRSETLVDDLDDPYSTLATLTDASAQLITYEDSIYFLQLFRRRGQKPVPFIPVLDADFETWFKKDSLWQSEDIAAVPNHDAQRVCILHGPVAAQYSTKVDEPVGEILGNIHTAWVTAILQTHYQGQSELVPVFDNSPFHASQVESSKTNTELSTPPLNHGLWTLEQWIVHIVQSRDKNLNWAKALLASPRVLCGRRLVPNPFITTLSGLRSMDIHVAETTKTGVGAGFTFFKIPLEETHQDLLDLTLQSNNEISIQISHYPTLQSAPITLTHHMSCQFSKLAMNKSLSDRSAMIRDFYRRIWLGTSHESSHKSIYDKFECEPYTVTADAIRKYNDCTRLPTSMPPTSWATSEVPLDFAVVIAWKALVKPLFSRELEADILKLLHVSNEITLHSDHSPPMVHDVLHTESQVTEVVLQPSGKMVQVEAHVFRGKSCILDLKTRFLLVGNDTHRDHLFRRSILPPSEILLEDEISAMQLVQSSWFQPLRDTSDLVGKRVVFQLEDLMQFHENGQIRCHQITGCAMLDGSIVGNCYLETPDDAYLSLMGNILSQQTGSSSQPAIFETPLLLFEEQEISFTAPTCEQTIAYSAASGDSNPIHVSPVFASLAGLSSPIVHGMHISAEVLQIVYTWLCASSMSRLKKSHVLFAGKVCTGDRLAVSMKHTAMHRGLRVVEVQIHKNMAEELVFVGTYEIEQPLTALVFTGQGSQKKGMGMDLRDKSAAARRIWDTADDHFQHEYGFRITDIVRHDPPSLTVHFGGVHGRRVRSNYMALTYERVASDGQIIEAKLFPTINENTTKYVFSSESGLLSSTQFTQPALGLMELAIMADLEARQLIPSNVTFAGHSLGEYSALMAVGHIMPLEVFISTVFYRGLVMQSTVTYDHHGRSKYAMCAVDPTRVSTDFDGQKLGWLVTQIASEGQWLLEVVNHNVIDSQYVCAGEAIALHCLGVVLDRIHYASKSFFDDGSFDLTDCIRESVKEIRKDRSKVVLSRSKASIPLKGLDVPFHSSHLRSGVDPFRRRLQRSIKLDNASPTKLIGRYIPNLTGKPFEVTRQYFNEVLRLTGSIPIQQALESWDRVASTI.

The interval 1 to 32 is disordered; sequence MFPGDMESKASSMNGDQPSSPTPSSSTSVTIP. The segment covering 18–32 has biased composition (low complexity); the sequence is PSSPTPSSSTSVTIP. The acetyltransferase (AT) domain stretch occupies residues 182–543; the sequence is VYVIFGGQGN…KAGQGVRVIH (362 aa). Serine 301 functions as the For acetyltransferase activity in the catalytic mechanism. The tract at residues 600 to 845 is enoyl reductase (ER) domain; the sequence is TRLFLQPPIM…LIVATEGAPD (246 aa). Positions 1157–1640 are dehydratase (DH) domain; that stretch reads DKNLNWAKAL…CTGDRLAVSM (484 aa). The MaoC-like domain occupies 1549–1661; that stretch reads FEEQEISFTA…VEVQIHKNMA (113 aa). Positions 1679–2043 are malonyl/palmitoyl transferase (MT/PT) domain; sequence LVFTGQGSQK…FNEVLRLTGS (365 aa). Residue serine 1824 is the For malonyltransferase activity of the active site.

This sequence belongs to the fungal fatty acid synthetase subunit beta family. As to quaternary structure, [Alpha(6)beta(6)] hexamers of two multifunctional subunits (alpha and beta).

The enzyme catalyses acetyl-CoA + n malonyl-CoA + 2n NADPH + 4n H(+) = a long-chain-acyl-CoA + n CoA + n CO2 + 2n NADP(+).. The catalysed reaction is holo-[ACP] + acetyl-CoA = acetyl-[ACP] + CoA. It catalyses the reaction holo-[ACP] + malonyl-CoA = malonyl-[ACP] + CoA. It carries out the reaction a (3R)-hydroxyacyl-[ACP] = a (2E)-enoyl-[ACP] + H2O. The enzyme catalyses a 2,3-saturated acyl-[ACP] + NAD(+) = a (2E)-enoyl-[ACP] + NADH + H(+). The catalysed reaction is (9Z)-octadecenoyl-[ACP] + H2O = (9Z)-octadecenoate + holo-[ACP] + H(+). It functions in the pathway mycotoxin biosynthesis. In terms of biological role, fatty acid synthase subunit beta; part of the gene cluster that mediates the biosynthesis of gramillins A and B, bicyclic lipopeptides that induce cell death in maize leaves but not in wheat leaves. The nonribosomal peptide synthetase GRA1 incorporates respectively a glutamic adic (Glu), a leucine (Leu), a serine (Ser), a hydroxyglutamine (HOGln), a 2-amino decanoic acid, and 2 cysteins (CysB and CysA). The biosynthesis of 2-amino decanoic acid incorporated in gramillins could be initiated by a fatty acid synthase composed of the alpha and beta subunits FGSG_00036 and FGSG_11656. The cytochrome P450 monooxygenase FGSG_15680 could hydroxylate the fatty acid chain. Subsequent oxidation to the ketone by the oxidoreductase FGSG_00048 and transamination by aminotransferase FGSG_00049 could form 2-amino-decanoic acid. On the other hand, FGSG_15680 could also be responsible for the HO-modified glutamine at the gamma-position. Whether hydroxylation occurs on the fully assembled product or on the Gln residue prior to assembly into the gramillins requires further proof. The thioredoxin FGSG_00043 could also be required for the disulfide-bond formation between CysA and CysB. The specific involvement of the remaining proteins from the cluster is more difficult to discern, but could have broader regulatory (FGSG_00040 and FGSG_11657) or enzymatic functions (FGSG_00044 and FGSG_00045). The final C-domain of GRA1 does not possess the expected sequence of a termination CT domain, often implicated in macrocyclization and release of a cyclopeptidein fungal NRPs; and the thioesterase FGSG_00047 may act in concert with the terminal C-domain of GRA1 to catalyze the formation of the macrocyclic anhydride and release of the products. The sequence is that of Fatty acid synthase subunit beta from Gibberella zeae (strain ATCC MYA-4620 / CBS 123657 / FGSC 9075 / NRRL 31084 / PH-1) (Wheat head blight fungus).